Consider the following 356-residue polypeptide: Phosphoribosyl pyrophosphate synthase-associated protein 1 (356 aa).

An N-acetylmethionine modification is found at Met1. 2 positions are modified to phosphoserine: Ser177 and Ser215.

Belongs to the ribose-phosphate pyrophosphokinase family. Binds to PRPS1 and PRPS2.

Functionally, seems to play a negative regulatory role in 5-phosphoribose 1-diphosphate synthesis. This Mus musculus (Mouse) protein is Phosphoribosyl pyrophosphate synthase-associated protein 1 (Prpsap1).